Here is a 675-residue protein sequence, read N- to C-terminus: G-protein coupled receptor moody (675 aa).

Topologically, residues 1–44 (MSDETTGSLGDAFSPMDTPTTTIMPPPADVDESGFSHSLLTFAA) are extracellular. Residues 45–65 (VMTFLIMIVGICGNLLTVVAL) form a helical membrane-spanning segment. Residues 66 to 73 (LKCPKVRN) lie on the Cytoplasmic side of the membrane. The chain crosses the membrane as a helical span at residues 74–94 (VAAAFIISLCIADLLFCALVL). The Extracellular segment spans residues 95-115 (PFQGLRFVQGTWRHGEVLCRL). Cysteine 113 and cysteine 192 are joined by a disulfide. The chain crosses the membrane as a helical span at residues 116 to 136 (IPFIQYGNIGVSLLCIAMITI). Over 137–156 (NRYVMITHYSLYNRIYKRHW) the chain is Cytoplasmic. Residues 157–177 (IAIMIAACWLFSYGMQLPTLL) form a helical membrane-spanning segment. Over 178–206 (GAWGRFGYDARLQTCSIMSDRHGHSSKTT) the chain is Extracellular. Residues 207–227 (LFITAFVIPCLVIIACYAKIF) form a helical membrane-spanning segment. Residues 228 to 327 (WVVHKSEQRL…AKRNEWRITK (100 aa)) lie on the Cytoplasmic side of the membrane. The tract at residues 258–316 (TSMPSGDGANPSQVPAGCRVSSDSSSNYSTDVPDTTPGGAGGGAGVKQQPSRVKDQREV) is disordered. A compositionally biased stretch (low complexity) spans 278-294 (SSDSSSNYSTDVPDTTP). The chain crosses the membrane as a helical span at residues 328 to 348 (MVLAIFLSFVICYLPITIVKV). Residues 349–359 (ADKDVEHPSLH) lie on the Extracellular side of the membrane. The chain crosses the membrane as a helical span at residues 360-380 (IFSYIMLYLSACINPIIYVIM). Topologically, residues 381 to 675 (NKQYRKAYKT…LMDKKKFPKD (295 aa)) are cytoplasmic. Disordered stretches follow at residues 475 to 568 (SKSS…GNGS) and 588 to 675 (LPPT…FPKD). A compositionally biased stretch (low complexity) spans 536-551 (SSVISANPSSSPSPSS). Residues 552–565 (SGGGIYRPGIGSMG) are compositionally biased toward gly residues. Residues 666 to 675 (LMDKKKFPKD) are compositionally biased toward basic and acidic residues.

This sequence belongs to the G-protein coupled receptor 1 family.

It is found in the cell membrane. Functionally, required in glia to regulate the acute sensitivity to cocaine and to continuously maintain the proper blood-brain barrier (BBB) function. A moody-mediated signaling pathway functions in glia to regulate nervous system insulation and drug-related behaviors. This is G-protein coupled receptor moody from Drosophila pseudoobscura pseudoobscura (Fruit fly).